Here is a 716-residue protein sequence, read N- to C-terminus: Polyribonucleotide nucleotidyltransferase (716 aa).

Asp-490 and Asp-496 together coordinate Mg(2+). The KH domain occupies 556-615; sequence PKIETLTIPTDKIREVIGSGGKVIREIVETSGAKVDINDDGVIKIASNDQAAIKKAYDMI. Residues 625–693 enclose the S1 motif domain; the sequence is GQIYTGKVVK…ERGKVRLGMK (69 aa). Positions 695–716 are disordered; that stretch reads VDQETGQEIQPEKKEKEEAGEA. The segment covering 704–716 has biased composition (basic and acidic residues); the sequence is QPEKKEKEEAGEA.

This sequence belongs to the polyribonucleotide nucleotidyltransferase family. The cofactor is Mg(2+).

It is found in the cytoplasm. It catalyses the reaction RNA(n+1) + phosphate = RNA(n) + a ribonucleoside 5'-diphosphate. Functionally, involved in mRNA degradation. Catalyzes the phosphorolysis of single-stranded polyribonucleotides processively in the 3'- to 5'-direction. This chain is Polyribonucleotide nucleotidyltransferase, found in Cereibacter sphaeroides (strain ATCC 17029 / ATH 2.4.9) (Rhodobacter sphaeroides).